Consider the following 699-residue polypeptide: MNPSEMQRKAPPRRRRHRNRAPLTHKMNKMVTSEEQMKLPSTKKAEPPTWAQLKKLTQLATKYLENTKVTQTPESMLLAALMIVSMVVSLPMPAGAAVANYTNWAYVPFPPLIRAVTWMDNPIEVYVNDSVWVPGPIDDRCPAKPEEEGMMINISIGYRYPPICLGRAPGCLMPAVQNWLVEVPTVSPISRFTYHMVSGMSLRPRVNYLQDFSYQRSLKFRPKGKPCPKEIPKESKNTEVLVWEECVANSAVILQNNEFGTIIDWAPRGQFYHNCSGQTQSCPSAQVSPAVDSDLTESLDKHKHKKLQSFYPWEWGEKRISTPRPKIVSPVSGPEHPELWRLTVASHHIRIWSGNQTLETRDRKPFYTVDLNSSLTLPLQSCVKPPYMLVVGNIVIKPDSQTITCENCRLLTCIDSTFNWQHRILLVRAREGVWIPVSMDRPWEASPSVHILTEVLKGVLNRSKRFIFTLIAVIMGLIAVTATAAVAGVALHSSVQSVNFVNDGQKNSTRLWNSQSSIDQKLANQINDLRQTVIWMGDRLMSLEHRFQLQCDWNTSDFCITPQIYNDSEHHWDMVRRHLQGREDNLTLDISKLKEQIFEASKAHLNLVPGTEAIAGVADGLANLNPVTWVKTIGSTTIINLILILVCLFCLLLVCRCTQQLRRDSDHRERAMMTMAVLSKRKGGNVGKSKRDQIVTVSV.

Residues 1–47 (MNPSEMQRKAPPRRRRHRNRAPLTHKMNKMVTSEEQMKLPSTKKAEP) form a disordered region. Positions 1 to 89 (MNPSEMQRKA…ALMIVSMVVS (89 aa)) are cleaved as a signal peptide. Over residues 10 to 20 (APPRRRRHRNR) the composition is skewed to basic residues. Residues 90–632 (LPMPAGAAVA…NLNPVTWVKT (543 aa)) are Extracellular-facing. N-linked (GlcNAc...) asparagine glycosylation is found at asparagine 100, asparagine 128, asparagine 153, asparagine 274, asparagine 355, asparagine 372, and asparagine 461. The interval 466–486 (FIFTLIAVIMGLIAVTATAAV) is fusion peptide. 4 N-linked (GlcNAc...) asparagine glycosylation sites follow: asparagine 507, asparagine 554, asparagine 566, and asparagine 585. A helical membrane pass occupies residues 633–653 (IGSTTIINLILILVCLFCLLL). The Cytoplasmic segment spans residues 654 to 699 (VCRCTQQLRRDSDHRERAMMTMAVLSKRKGGNVGKSKRDQIVTVSV).

Belongs to the beta type-B retroviral envelope protein family. HERV class-II K(HML-2) env subfamily. The surface (SU) and transmembrane (TM) proteins form a heterodimer. SU and TM are attached by noncovalent interactions or by a labile interchain disulfide bond. Specific enzymatic cleavages in vivo yield the mature SU and TM proteins.

It localises to the cell membrane. It is found in the virion. In terms of biological role, retroviral envelope proteins mediate receptor recognition and membrane fusion during early infection. Endogenous envelope proteins may have kept, lost or modified their original function during evolution. This endogenous envelope protein has lost its original fusogenic properties. SU mediates receptor recognition. Functionally, TM anchors the envelope heterodimer to the viral membrane through one transmembrane domain. The other hydrophobic domain, called fusion peptide, mediates fusion of the viral membrane with the target cell membrane. This Homo sapiens (Human) protein is Endogenous retrovirus group K member 8 Env polyprotein (ERVK-8).